The primary structure comprises 806 residues: DNA topoisomerase 4 subunit A (806 aa).

The Topo IIA-type catalytic domain maps to 33–499; that stretch reads LPDARDGLKP…EEIKINLEVM (467 aa). The O-(5'-phospho-DNA)-tyrosine intermediate role is filled by tyrosine 121.

Belongs to the type II topoisomerase GyrA/ParC subunit family. ParC type 2 subfamily. In terms of assembly, heterotetramer composed of ParC and ParE.

It localises to the cell membrane. The protein resides in the cytoplasm. The catalysed reaction is ATP-dependent breakage, passage and rejoining of double-stranded DNA.. Topoisomerase IV is essential for chromosome segregation. It relaxes supercoiled DNA. Performs the decatenation events required during the replication of a circular DNA molecule. This Bacillus subtilis (strain 168) protein is DNA topoisomerase 4 subunit A.